Consider the following 3801-residue polypeptide: Lysosomal-trafficking regulator (3801 aa).

The interval 148–173 is disordered; the sequence is KITHRYSVRDARKTQLSTSDSEANSD. S164 is subject to Phosphoserine. T165 is subject to Phosphothreonine. Phosphoserine is present on S166. The stretch at 662–700 is one WD 1 repeat; it reads ELSSSLSSPSYRFQGILPSSGSEDLLWKWDALKAYQNFV. A compositionally biased stretch (basic and acidic residues) spans 1181 to 1190; sequence AMTEKSHQSA. Disordered stretches follow at residues 1181–1203 and 1221–1256; these read AMTE…FSEE and YEAD…SPND. The segment covering 1221–1238 has biased composition (acidic residues); that stretch reads YEADSESNPEDGETQDDG. The span at 1246 to 1256 shows a compositional bias: polar residues; sequence EGFSASSSPND. 2 positions are modified to phosphoserine: S1509 and S1510. The stretch at 1582 to 1626 is one WD 2 repeat; the sequence is SQENIFLPSKWQHLVLTYLQQPQGKRRIHGKISIWVSGQRKPDVT. 5 positions are modified to phosphoserine: S2105, S2124, S2213, S2217, and S2264. Residues 2205 to 2215 are compositionally biased toward basic and acidic residues; sequence KQLGAEPRSED. A disordered region spans residues 2205–2224; sequence KQLGAEPRSEDDSPGDESCP. One can recognise a BEACH-type PH domain in the interval 3009–3115; that stretch reads AASESIRVNR…VRDDVYHNIL (107 aa). One can recognise a BEACH domain in the interval 3120 to 3422; the sequence is PNLLEYGNIT…QLFHMAHVSR (303 aa). 5 WD repeats span residues 3563 to 3602, 3614 to 3653, 3656 to 3699, 3700 to 3744, and 3749 to 3788; these read SQQY…STPS, GHTE…YVQS, GHKS…VGHV, HCRE…PVRE, and KSNK…RLKQ.

In terms of assembly, interacts with CPAP, LIP8 and ZNF521. Abundantly expressed in adult and fetal thymus, peripheral blood leukocytes, bone marrow and several regions of the adult brain.

The protein resides in the cytoplasm. Functionally, adapter protein that regulates and/or fission of intracellular vesicles such as lysosomes. Might regulate trafficking of effectors involved in exocytosis. In cytotoxic T-cells and natural killer (NK) cells, has role in the regulation of size, number and exocytosis of lytic granules. In macrophages and dendritic cells, regulates phagosome maturation by controlling the conversion of early phagosomal compartments into late phagosomes. In macrophages and dendritic cells, specifically involved in TLR3- and TLR4-induced production of pro-inflammatory cytokines by regulating the endosomal TLR3- TICAM1/TRIF and TLR4- TICAM1/TRIF signaling pathways. The sequence is that of Lysosomal-trafficking regulator (LYST) from Homo sapiens (Human).